The following is a 365-amino-acid chain: MAKSSEIEHPVKAFGWAARDTTGLLSPFKFSRRATGEKDVRLKVLFCGVCHSDHHMIHNNWGFTTYPIVPGHEIVGVVTEVGSKVEKVKVGDNVGIGCLVGSCRSCESCCDNRESHCENTIDTYGSIYFDGTMTHGGYSDTMVADEHFILRWPKNLPLDSGAPLLCAGITTYSPLKYYGLDKPGTKIGVVGLGGLGHVAVKMAKAFGAQVTVIDISESKRKEALEKLGADSFLLNSDQEQMKGARSSLDGIIDTVPVNHPLAPLFDLLKPNGKLVMVGAPEKPFELPVFSLLKGRKLLGGTINGGIKETQEMLDFAAKHNITADVEVIPMDYVNTAMERLVKSDVRYRFVIDIANTMRTEESLGA.

Zn(2+) is bound by residues cysteine 50, histidine 72, cysteine 103, cysteine 106, cysteine 109, cysteine 117, and cysteine 166.

This sequence belongs to the zinc-containing alcohol dehydrogenase family. Requires Zn(2+) as cofactor.

The protein localises to the cytoplasm. It carries out the reaction D-mannitol + NAD(+) = D-mannose + NADH + H(+). Its function is as follows. Oxidizes mannitol to mannose. Provides the initial step by which translocated mannitol is committed to central metabolism and, by regulating mannitol pool size, is important in regulating salt tolerance at the cellular level. This chain is Mannitol dehydrogenase (MTD), found in Apium graveolens (Celery).